Here is a 637-residue protein sequence, read N- to C-terminus: Phosphomethylpyrimidine synthase (637 aa).

Residues N242, M271, Y300, H336, 356–358 (SRG), 397–400 (DGLR), and E436 each bind substrate. H440 is a binding site for Zn(2+). Y463 is a substrate binding site. H504 provides a ligand contact to Zn(2+). Positions 584, 587, and 592 each coordinate [4Fe-4S] cluster.

Belongs to the ThiC family. In terms of assembly, homodimer. [4Fe-4S] cluster serves as cofactor.

The catalysed reaction is 5-amino-1-(5-phospho-beta-D-ribosyl)imidazole + S-adenosyl-L-methionine = 4-amino-2-methyl-5-(phosphooxymethyl)pyrimidine + CO + 5'-deoxyadenosine + formate + L-methionine + 3 H(+). Its pathway is cofactor biosynthesis; thiamine diphosphate biosynthesis. Catalyzes the synthesis of the hydroxymethylpyrimidine phosphate (HMP-P) moiety of thiamine from aminoimidazole ribotide (AIR) in a radical S-adenosyl-L-methionine (SAM)-dependent reaction. The sequence is that of Phosphomethylpyrimidine synthase from Bordetella pertussis (strain Tohama I / ATCC BAA-589 / NCTC 13251).